The following is a 376-amino-acid chain: Chaperone protein DnaJ (376 aa).

Positions 5-70 (DFYETLGVAK…QKRAAYDRYG (66 aa)) constitute a J domain. Residues 137-215 (GKTAQIRVPT…CHGQGRVTEE (79 aa)) form a CR-type zinc finger. Positions 150, 153, 167, 170, 189, 192, 203, and 206 each coordinate Zn(2+). CXXCXGXG motif repeat units follow at residues 150–157 (CDVCSGSG), 167–174 (CGTCQGSG), 189–196 (CPTCHGRG), and 203–210 (CPKCHGQG).

The protein belongs to the DnaJ family. Homodimer. It depends on Zn(2+) as a cofactor.

It localises to the cytoplasm. Its function is as follows. Participates actively in the response to hyperosmotic and heat shock by preventing the aggregation of stress-denatured proteins and by disaggregating proteins, also in an autonomous, DnaK-independent fashion. Unfolded proteins bind initially to DnaJ; upon interaction with the DnaJ-bound protein, DnaK hydrolyzes its bound ATP, resulting in the formation of a stable complex. GrpE releases ADP from DnaK; ATP binding to DnaK triggers the release of the substrate protein, thus completing the reaction cycle. Several rounds of ATP-dependent interactions between DnaJ, DnaK and GrpE are required for fully efficient folding. Also involved, together with DnaK and GrpE, in the DNA replication of plasmids through activation of initiation proteins. The chain is Chaperone protein DnaJ from Rhizobium leguminosarum bv. trifolii (strain WSM2304).